The following is a 213-amino-acid chain: ATP-dependent Clp protease proteolytic subunit (213 aa).

Ser-114 (nucleophile) is an active-site residue. Residue His-139 is part of the active site.

The protein belongs to the peptidase S14 family. Fourteen ClpP subunits assemble into 2 heptameric rings which stack back to back to give a disk-like structure with a central cavity, resembling the structure of eukaryotic proteasomes.

The protein resides in the cytoplasm. It carries out the reaction Hydrolysis of proteins to small peptides in the presence of ATP and magnesium. alpha-casein is the usual test substrate. In the absence of ATP, only oligopeptides shorter than five residues are hydrolyzed (such as succinyl-Leu-Tyr-|-NHMec, and Leu-Tyr-Leu-|-Tyr-Trp, in which cleavage of the -Tyr-|-Leu- and -Tyr-|-Trp bonds also occurs).. In terms of biological role, cleaves peptides in various proteins in a process that requires ATP hydrolysis. Has a chymotrypsin-like activity. Plays a major role in the degradation of misfolded proteins. This is ATP-dependent Clp protease proteolytic subunit from Ectopseudomonas mendocina (strain ymp) (Pseudomonas mendocina).